Here is a 104-residue protein sequence, read N- to C-terminus: Large ribosomal subunit protein uL24 (104 aa).

This sequence belongs to the universal ribosomal protein uL24 family. In terms of assembly, part of the 50S ribosomal subunit.

Functionally, one of two assembly initiator proteins, it binds directly to the 5'-end of the 23S rRNA, where it nucleates assembly of the 50S subunit. One of the proteins that surrounds the polypeptide exit tunnel on the outside of the subunit. This is Large ribosomal subunit protein uL24 from Pseudomonas aeruginosa (strain LESB58).